The primary structure comprises 479 residues: MSIVVKNNIHWVGQRDWEVRDFHGTEYKTLRGSSYNSYLIREEKNVLIDTVDHKFSREFVQNLRNEIDLADIDYIVINHAEEDHAGALTELMAQIPDTPIYCTANAIDSINGHHHHPEWNFNVVKTGDTLDIGNGKQLIFVETPMLHWPDSMMTYLTGDAVLFSNDAFGQHYCDEHLFNDEVDQTELFEQCQRYYANILTPFSRLVTPKITEILGFNLPVDMIATSHGVVWRDNPTQIVELYLKWAADYQEDRITIFYDTMSNNTRMMADAIAQGIAETDPRVAVKIFNVARSDKNEILTNVFRSKGVLVGTSTMNNVMMPKIAGLVEEMTGLRFRNKRASAFGSHGWSGGAVDRLSTRLQDAGFEMSLSLKAKWRPDQDALKLCREHGREIARQWALAPLPQSTVNTVVKEETSATTTADLGPRMQCSVCQWIYDPAKGEPMQDVAPGTPWSEVPDNFLCPECSLGKDVFEELASEAK.

The zinc metallo-hydrolase stretch occupies residues 30 to 210; it reads LRGSSYNSYL…PFSRLVTPKI (181 aa). Histidine 79, glutamate 81, aspartate 83, histidine 147, aspartate 166, and histidine 227 together coordinate Fe cation. One can recognise a Flavodoxin-like domain in the interval 254–393; sequence ITIFYDTMSN…LCREHGREIA (140 aa). FMN is bound by residues 260–264 and 342–369; these read TMSNN and AFGS…EMSL. In terms of domain architecture, Rubredoxin-like spans 423-479; it reads GPRMQCSVCQWIYDPAKGEPMQDVAPGTPWSEVPDNFLCPECSLGKDVFEELASEAK. Fe cation contacts are provided by cysteine 428, cysteine 431, cysteine 461, and cysteine 464.

In the N-terminal section; belongs to the zinc metallo-hydrolase group 3 family. In terms of assembly, homotetramer. Fe cation is required as a cofactor. It depends on FMN as a cofactor.

Its subcellular location is the cytoplasm. It functions in the pathway nitrogen metabolism; nitric oxide reduction. In terms of biological role, anaerobic nitric oxide reductase; uses NADH to detoxify nitric oxide (NO), protecting several 4Fe-4S NO-sensitive enzymes. Has at least 2 reductase partners, only one of which (NorW, flavorubredoxin reductase) has been identified. NO probably binds to the di-iron center; electrons enter from the reductase at rubredoxin and are transferred sequentially to the FMN center and the di-iron center. Also able to function as an aerobic oxygen reductase. This chain is Anaerobic nitric oxide reductase flavorubredoxin (norV), found in Escherichia coli (strain K12 / DH10B).